A 425-amino-acid polypeptide reads, in one-letter code: Sensor histidine kinase NarS (425 aa).

The next 6 membrane-spanning stretches (helical) occupy residues 42–62, 71–91, 107–127, 130–150, 155–175, and 181–201; these read IASV…VVGT, IVLI…AYSA, LEPF…QLLS, GIYP…DVST, VVLA…PVML, and PETI…LMVV. In terms of domain architecture, Histidine kinase spans 224–425; sequence QTMTASEVLQ…HVCVELPLKR (202 aa). Phosphohistidine; by autocatalysis is present on His-241.

Post-translationally, autophosphorylated on His-241.

Its subcellular location is the cell membrane. It carries out the reaction ATP + protein L-histidine = ADP + protein N-phospho-L-histidine.. In terms of biological role, member of the two-component regulatory system NarS/NarL involved in gene expression during aerobic nitrate metabolism. Plays therefore a crucial role in anaerobic survival of mycobacteria in host. Functions as a sensor protein kinase which is autophosphorylated at a histidine residue and transfers its phosphate group to the conserved aspartic acid residue in the regulatory domain of NarL. In turn, NarL binds to the upstream promoter regions of target genes to regulate their expression during aerobic nitrate metabolism. The sequence is that of Sensor histidine kinase NarS from Mycobacterium tuberculosis (strain ATCC 25618 / H37Rv).